A 555-amino-acid polypeptide reads, in one-letter code: Glutamine--tRNA ligase (555 aa).

A 'HIGH' region motif is present at residues 34 to 44 (PEPNGYLHIGH). ATP-binding positions include 35–37 (EPN) and 41–47 (HIGHAKS). Asp67 and Tyr212 together coordinate L-glutamine. ATP is bound by residues Thr231, 261-262 (RL), and 269-271 (MSK). The 'KMSKS' region signature appears at 268 to 272 (IMSKR).

It belongs to the class-I aminoacyl-tRNA synthetase family. As to quaternary structure, monomer.

Its subcellular location is the cytoplasm. The catalysed reaction is tRNA(Gln) + L-glutamine + ATP = L-glutaminyl-tRNA(Gln) + AMP + diphosphate. The chain is Glutamine--tRNA ligase from Yersinia pseudotuberculosis serotype O:1b (strain IP 31758).